A 308-amino-acid chain; its full sequence is Uridine diphosphate glucose pyrophosphatase NUDT22 (308 aa).

Substrate contacts are provided by phenylalanine 56, tyrosine 86, arginine 138, alanine 143, aspartate 150, histidine 155, and glutamate 157. In terms of domain architecture, Nudix hydrolase spans 117 to 284 (ADPLGVGAAL…KGAILLYNRH (168 aa)). Positions 174–195 (GLLVVRELFSSVLQEICDEVNL) match the Nudix box motif. Glutamate 188 and glutamate 192 together coordinate Mg(2+). Substrate is bound at residue serine 273.

It belongs to the Nudix hydrolase family. Mg(2+) is required as a cofactor.

The catalysed reaction is UDP-sugar + H2O = UMP + alpha-D-aldose 1-phosphate.. Hydrolyzes UDP-glucose to glucose 1-phosphate and UMP and UDP-galactose to galactose 1-phosphate and UMP. Preferred substrate is UDP-glucose. The chain is Uridine diphosphate glucose pyrophosphatase NUDT22 (Nudt22) from Mus musculus (Mouse).